The primary structure comprises 223 residues: Small ribosomal subunit protein uS3 (223 aa).

The 69-residue stretch at 39-107 (VREFLKQKLK…PVQVSVEEIR (69 aa)) folds into the KH type-2 domain.

It belongs to the universal ribosomal protein uS3 family. As to quaternary structure, part of the 30S ribosomal subunit. Forms a tight complex with proteins S10 and S14.

Functionally, binds the lower part of the 30S subunit head. Binds mRNA in the 70S ribosome, positioning it for translation. The polypeptide is Small ribosomal subunit protein uS3 (Methylococcus capsulatus (strain ATCC 33009 / NCIMB 11132 / Bath)).